Reading from the N-terminus, the 526-residue chain is Nucleolar complex protein 4 homolog A (526 aa).

A run of 3 helical transmembrane segments spans residues 307–327, 358–378, and 386–406; these read AAYD…FILI, FFHL…LVAA, and LALT…CNLI.

Belongs to the CBF/MAK21 family.

It localises to the nucleus membrane. Its subcellular location is the nucleus. The protein localises to the nucleolus. The polypeptide is Nucleolar complex protein 4 homolog A (noc4l-a) (Xenopus laevis (African clawed frog)).